Here is a 912-residue protein sequence, read N- to C-terminus: Phosphoenolpyruvate carboxylase (912 aa).

Active-site residues include H138 and K575.

It belongs to the PEPCase type 1 family. Requires Mg(2+) as cofactor.

It catalyses the reaction oxaloacetate + phosphate = phosphoenolpyruvate + hydrogencarbonate. Functionally, forms oxaloacetate, a four-carbon dicarboxylic acid source for the tricarboxylic acid cycle. The protein is Phosphoenolpyruvate carboxylase of Lactobacillus helveticus (strain DPC 4571).